Reading from the N-terminus, the 395-residue chain is Alanine racemase 2 (395 aa).

Catalysis depends on lysine 60, which acts as the Proton acceptor; specific for D-alanine. Lysine 60 is modified (N6-(pyridoxal phosphate)lysine). Arginine 158 contacts substrate. The active-site Proton acceptor; specific for L-alanine is tyrosine 288. Position 332 (methionine 332) interacts with substrate.

It belongs to the alanine racemase family. Pyridoxal 5'-phosphate serves as cofactor.

It catalyses the reaction L-alanine = D-alanine. It participates in amino-acid biosynthesis; D-alanine biosynthesis; D-alanine from L-alanine: step 1/1. Catalyzes the interconversion of L-alanine and D-alanine. May also act on other amino acids. The chain is Alanine racemase 2 (alr2) from Clostridium acetobutylicum (strain ATCC 824 / DSM 792 / JCM 1419 / IAM 19013 / LMG 5710 / NBRC 13948 / NRRL B-527 / VKM B-1787 / 2291 / W).